A 237-amino-acid chain; its full sequence is Ribonuclease PH (237 aa).

Phosphate-binding positions include R86 and 124 to 126 (GTR).

Belongs to the RNase PH family. Homohexameric ring arranged as a trimer of dimers.

The enzyme catalyses tRNA(n+1) + phosphate = tRNA(n) + a ribonucleoside 5'-diphosphate. Functionally, phosphorolytic 3'-5' exoribonuclease that plays an important role in tRNA 3'-end maturation. Removes nucleotide residues following the 3'-CCA terminus of tRNAs; can also add nucleotides to the ends of RNA molecules by using nucleoside diphosphates as substrates, but this may not be physiologically important. Probably plays a role in initiation of 16S rRNA degradation (leading to ribosome degradation) during starvation. This is Ribonuclease PH from Zymomonas mobilis subsp. mobilis (strain ATCC 31821 / ZM4 / CP4).